The following is a 301-amino-acid chain: MEQLVESLRALQVGEVRVNESLAHHTTWKIGGPADVFVIPNDIEGLKNTMKLIQETGCKWRVIGRGSNILVSDKGLRGVTIKLDKGLDHLEVNGESITVGAGFPVVKLATVISRQGLAGLEFAAGIPGSVGGAVFMNAGAHGSDISQILTKAHVLFPDGTLRWLTNEEMAFSYRTSLLQKNDGICVEAIFSLTRGDKEDIKKKLQKNKDYRRDTQPWNHPTCGSVFRNPLPEYAGQLIEKAGLKGYQIGGAQISTMHANFIVNTGDAKAADVLALIHHVKDTIQKQYQMNMETEVELIGER.

The FAD-binding PCMH-type domain maps to 29–195 (KIGGPADVFV…VEAIFSLTRG (167 aa)). The active site involves Arg-174. Ser-224 serves as the catalytic Proton donor. Glu-294 is an active-site residue.

Belongs to the MurB family. It depends on FAD as a cofactor.

Its subcellular location is the cytoplasm. It catalyses the reaction UDP-N-acetyl-alpha-D-muramate + NADP(+) = UDP-N-acetyl-3-O-(1-carboxyvinyl)-alpha-D-glucosamine + NADPH + H(+). It functions in the pathway cell wall biogenesis; peptidoglycan biosynthesis. Its function is as follows. Cell wall formation. The polypeptide is UDP-N-acetylenolpyruvoylglucosamine reductase (Halalkalibacterium halodurans (strain ATCC BAA-125 / DSM 18197 / FERM 7344 / JCM 9153 / C-125) (Bacillus halodurans)).